Here is a 2587-residue protein sequence, read N- to C-terminus: Protein KINKY POLLEN (2587 aa).

Positions 1-27 (MAAFLVMFIFTIALFVALLWVFFKSLP) are cleaved as a signal peptide. An N-linked (GlcNAc...) asparagine glycan is attached at asparagine 71. The tract at residues 103–124 (PSHSSKGPRKPKTRKSSSGGKG) is disordered. Basic residues predominate over residues 108 to 117 (KGPRKPKTRK). Asparagine 262, asparagine 281, and asparagine 485 each carry an N-linked (GlcNAc...) asparagine glycan. Residues 270-290 (SKGEVIDSSSGNTTSEKPPKQ) are disordered. The segment covering 276–285 (DSSSGNTTSE) has biased composition (polar residues). A disordered region spans residues 589-611 (GSSSKNKQEKGAHRSKPPSGRGT). A coiled-coil region spans residues 691 to 716 (TLNKEIQSTQVELETAKAIYQEFLEE). The segment at 784–814 (QHGNRNPEEASTVTGDKQKEEPTTTPNSLDK) is disordered. 4 N-linked (GlcNAc...) asparagine glycosylation sites follow: asparagine 1155, asparagine 1250, asparagine 1281, and asparagine 1486. Disordered regions lie at residues 1571 to 1608 (HCSK…KHPD), 1646 to 1673 (VDAR…DGYN), and 1729 to 1797 (EGNQ…PEEE). Over residues 1576–1590 (AQMSRTSSLSGSTDR) the composition is skewed to polar residues. N-linked (GlcNAc...) asparagine glycosylation is present at asparagine 1595. Residues 1646 to 1666 (VDARSTKEKQSEPEENSHSDP) show a composition bias toward basic and acidic residues. Over residues 1746–1760 (KQPSTGSGNLASQSK) the composition is skewed to polar residues. Residues asparagine 1861, asparagine 1951, asparagine 1981, asparagine 2036, and asparagine 2278 are each glycosylated (N-linked (GlcNAc...) asparagine). The stretch at 2006–2036 (IEEVELAKIELEAKERDRMMLLDDIRKLTQN) forms a coiled coil. A compositionally biased stretch (polar residues) spans 2274-2287 (QGSKNQSLKSSTIR). Disordered regions lie at residues 2274–2299 (QGSK…TSSF), 2319–2360 (SMEH…KKSR), and 2442–2469 (KDDI…RPGD). Composition is skewed to basic and acidic residues over residues 2289 to 2299 (SGRELRRTSSF), 2322 to 2336 (HQGE…DSKT), 2343 to 2359 (SVHE…DKKS), and 2442 to 2458 (KDDI…RTDQ). N-linked (GlcNAc...) asparagine glycosylation is found at asparagine 2513 and asparagine 2544. Residues 2533–2587 (IRRHSKKFQNQNTTKGSKKTQLSPTLSPPKEEDQYESDSSSGSSAYEEFLDQNQI) are disordered. Positions 2540–2557 (FQNQNTTKGSKKTQLSPT) are enriched in polar residues. Positions 2569–2579 (SDSSSGSSAYE) are enriched in low complexity.

This sequence belongs to the SABRE family. In terms of tissue distribution, mostly expressed in pollen and roots, especially in tip-growing cells, but also present in seedlings, stems, leaves, buds, flowers, siliques and seeds.

It localises to the secreted. Its subcellular location is the golgi apparatus. May be involved in membrane trafficking. Required for tip growth in pollen tubes and root hairs. The chain is Protein KINKY POLLEN from Arabidopsis thaliana (Mouse-ear cress).